The following is an 81-amino-acid chain: Acyl carrier protein (81 aa).

The Carrier domain occupies 2 to 80 (ASEQEILSGL…DAVAYISQAQ (79 aa)). The residue at position 40 (S40) is an O-(pantetheine 4'-phosphoryl)serine.

This sequence belongs to the acyl carrier protein (ACP) family. 4'-phosphopantetheine is transferred from CoA to a specific serine of apo-ACP by AcpS. This modification is essential for activity because fatty acids are bound in thioester linkage to the sulfhydryl of the prosthetic group.

Its subcellular location is the cytoplasm. It functions in the pathway lipid metabolism; fatty acid biosynthesis. In terms of biological role, carrier of the growing fatty acid chain in fatty acid biosynthesis. The polypeptide is Acyl carrier protein (Kineococcus radiotolerans (strain ATCC BAA-149 / DSM 14245 / SRS30216)).